The chain runs to 477 residues: Secreted RxLR effector protein 102 (477 aa).

An N-terminal signal peptide occupies residues 1-20; the sequence is MRGGYYVLTALFVVASSEIA. The RxLR-dEER motif lies at 48-65; that stretch reads RFLRESRGVHGNVANEER. Disordered regions lie at residues 326–345, 351–370, 376–401, and 433–455; these read SKGQ…TSKG, IKRS…LPSI, SSKS…KRSR, and PRSA…APSS.

This sequence belongs to the RxLR effector family.

Its subcellular location is the secreted. It is found in the host nucleus. Functionally, secreted effector that acts as an elicitor that induces cell death in host plant cells. The sequence is that of Secreted RxLR effector protein 102 from Plasmopara viticola (Downy mildew of grapevine).